The primary structure comprises 1607 residues: Laminin subunit gamma-1 (1607 aa).

The first 33 residues, 1 to 33 (MTGGGRAALALQPRGRLWPLLAVLAAVAGCVRA), serve as a signal peptide directing secretion. The 240-residue stretch at 44-283 (RPQRCMPEFV…AISDFAVGGR (240 aa)) folds into the Laminin N-terminal domain. Asn58 and Asn132 each carry an N-linked (GlcNAc...) asparagine glycan. 15 cysteine pairs are disulfide-bonded: Cys284-Cys293, Cys286-Cys303, Cys305-Cys314, Cys340-Cys349, Cys342-Cys365, Cys368-Cys377, Cys380-Cys393, Cys396-Cys408, Cys398-Cys414, Cys416-Cys425, Cys428-Cys440, Cys443-Cys454, Cys445-Cys461, Cys463-Cys472, and Cys475-Cys490. Laminin EGF-like domains follow at residues 284 to 339 (CKCN…ESLP), 340 to 395 (CDCN…ACSP), 396 to 442 (CHCS…GCRP), and 443 to 492 (CSCD…GCTP). One can recognise a Laminin EGF-like 5; first part domain in the interval 493–502 (CFCFGHSSVC). The Laminin IV type A domain occupies 512 to 687 (DISSTFQIDE…PGVPATWVES (176 aa)). 2 N-linked (GlcNAc...) asparagine glycosylation sites follow: Asn574 and Asn648. Residues 688-721 (CTCPVGYGGQFCETCLPGYRRETPSLGPYSPCVL) enclose the Laminin EGF-like 5; second part domain. Intrachain disulfides connect Cys722–Cys731, Cys724–Cys738, Cys740–Cys749, Cys752–Cys768, Cys771–Cys779, Cys773–Cys790, Cys793–Cys802, Cys805–Cys823, Cys826–Cys840, Cys828–Cys847, Cys850–Cys859, Cys862–Cys879, Cys882–Cys896, Cys884–Cys903, Cys905–Cys914, Cys917–Cys930, Cys933–Cys945, Cys935–Cys952, Cys954–Cys963, Cys966–Cys978, Cys981–Cys993, Cys983–Cys999, Cys1001–Cys1010, and Cys1013–Cys1026. Laminin EGF-like domains lie at 722–770 (CTCN…DCQP) and 771–825 (CPCP…LCRP). Residues 826–881 (CQCNDNIDPNAVGNCNRLTGECLKCIYNTAGFYCDRCKEGFFGNPLAPNPADKCKA) form the Laminin EGF-like 8; nidogen-binding domain. 3 consecutive Laminin EGF-like domains span residues 882–932 (CACN…GCER), 933–980 (CDCH…GCKP), and 981–1028 (CDCH…GCQE). Asn1020 and Asn1105 each carry an N-linked (GlcNAc...) asparagine glycan. The interval 1029-1607 (CPACYRLVKD…CFNTPSIEKP (579 aa)) is domain II and I. The stretch at 1034 to 1594 (RLVKDKAAEH…HNLEDIKKTL (561 aa)) forms a coiled coil. The residue at position 1147 (Ser1147) is a Phosphoserine. 8 N-linked (GlcNAc...) asparagine glycosylation sites follow: Asn1159, Asn1173, Asn1203, Asn1221, Asn1239, Asn1378, Asn1393, and Asn1437. Ser1491 bears the Phosphoserine mark.

Laminin is a complex glycoprotein, consisting of three different polypeptide chains (alpha, beta, gamma), which are bound to each other by disulfide bonds into a cross-shaped molecule comprising one long and three short arms with globules at each end. Gamma-1 is a subunit of laminin-1 (laminin-111 or EHS laminin), laminin-2 (laminin-211 or merosin), laminin-3 (laminin-121 or S-laminin), laminin-4 (laminin-221 or S-merosin), laminin-6 (laminin-311 or K-laminin), laminin-7 (laminin-321 or KS-laminin), laminin-8 (laminin-411), laminin-9 (laminin-421), laminin-10 (laminin-511) and laminin-11 (laminin-521). Interacts with SVEP1. As to expression, found in the basement membranes (major component).

Its subcellular location is the secreted. The protein resides in the extracellular space. The protein localises to the extracellular matrix. It localises to the basement membrane. Binding to cells via a high affinity receptor, laminin is thought to mediate the attachment, migration and organization of cells into tissues during embryonic development by interacting with other extracellular matrix components. This Mus musculus (Mouse) protein is Laminin subunit gamma-1 (Lamc1).